A 284-amino-acid polypeptide reads, in one-letter code: Proteasome subunit beta (284 aa).

A propeptide spans 1-56 (removed in mature form; by autocatalysis); sequence MSPMESSSTRFPGQALPAAYLTPGSSSFTDFLRVAAPELMPGSRPVPDGAVEAPHG. Thr57 functions as the Nucleophile in the catalytic mechanism.

This sequence belongs to the peptidase T1B family. In terms of assembly, the 20S proteasome core is composed of 14 alpha and 14 beta subunits that assemble into four stacked heptameric rings, resulting in a barrel-shaped structure. The two inner rings, each composed of seven catalytic beta subunits, are sandwiched by two outer rings, each composed of seven alpha subunits. The catalytic chamber with the active sites is on the inside of the barrel. Has a gated structure, the ends of the cylinder being occluded by the N-termini of the alpha-subunits. Is capped by the proteasome-associated ATPase, ARC.

It localises to the cytoplasm. The enzyme catalyses Cleavage of peptide bonds with very broad specificity.. It functions in the pathway protein degradation; proteasomal Pup-dependent pathway. With respect to regulation, the formation of the proteasomal ATPase ARC-20S proteasome complex, likely via the docking of the C-termini of ARC into the intersubunit pockets in the alpha-rings, may trigger opening of the gate for substrate entry. Interconversion between the open-gate and close-gate conformations leads to a dynamic regulation of the 20S proteasome proteolysis activity. Functionally, component of the proteasome core, a large protease complex with broad specificity involved in protein degradation. This chain is Proteasome subunit beta, found in Saccharopolyspora erythraea (strain ATCC 11635 / DSM 40517 / JCM 4748 / NBRC 13426 / NCIMB 8594 / NRRL 2338).